Consider the following 518-residue polypeptide: Putative Rieske 2Fe-2S iron-sulfur protein MSMEG_6410/MSMEI_6242 (518 aa).

An Isoglutamyl lysine isopeptide (Lys-Gln) (interchain with Q-Cter in protein Pup) cross-link involves residue K375. The Rieske domain maps to 431 to 518 (LYTFFKCLTD…KGHELRCQKL (88 aa)). [2Fe-2S] cluster-binding residues include C471, H473, C491, and H494.

Requires [2Fe-2S] cluster as cofactor.

The polypeptide is Putative Rieske 2Fe-2S iron-sulfur protein MSMEG_6410/MSMEI_6242 (Mycolicibacterium smegmatis (strain ATCC 700084 / mc(2)155) (Mycobacterium smegmatis)).